The primary structure comprises 754 residues: Probable beta-glucosidase D (754 aa).

The N-terminal stretch at 1–20 is a signal peptide; sequence MKVLSFIVAAALLGLTGASS. N-linked (GlcNAc...) asparagine glycosylation is found at N66, N69, and N186. Positions 186 to 206 are disordered; sequence NRTGGGGGGGGDSGSAPYSSN. The span at 188–198 shows a compositional bias: gly residues; sequence TGGGGGGGGDS. N239 carries an N-linked (GlcNAc...) asparagine glycan. The active site involves D267. N-linked (GlcNAc...) asparagine glycosylation is found at N301, N345, N443, N512, N534, N573, N588, N655, and N745.

Belongs to the glycosyl hydrolase 3 family.

Its subcellular location is the secreted. It catalyses the reaction Hydrolysis of terminal, non-reducing beta-D-glucosyl residues with release of beta-D-glucose.. It functions in the pathway glycan metabolism; cellulose degradation. Beta-glucosidases are one of a number of cellulolytic enzymes involved in the degradation of cellulosic biomass. Catalyzes the last step releasing glucose from the inhibitory cellobiose. This is Probable beta-glucosidase D (bglD) from Aspergillus niger (strain ATCC MYA-4892 / CBS 513.88 / FGSC A1513).